A 118-amino-acid chain; its full sequence is Holo-[acyl-carrier-protein] synthase (118 aa).

Asp-5 and Glu-50 together coordinate Mg(2+).

Belongs to the P-Pant transferase superfamily. AcpS family. It depends on Mg(2+) as a cofactor.

The protein resides in the cytoplasm. It carries out the reaction apo-[ACP] + CoA = holo-[ACP] + adenosine 3',5'-bisphosphate + H(+). Its function is as follows. Transfers the 4'-phosphopantetheine moiety from coenzyme A to a Ser of acyl-carrier-protein. The sequence is that of Holo-[acyl-carrier-protein] synthase from Wolinella succinogenes (strain ATCC 29543 / DSM 1740 / CCUG 13145 / JCM 31913 / LMG 7466 / NCTC 11488 / FDC 602W) (Vibrio succinogenes).